We begin with the raw amino-acid sequence, 479 residues long: Glutathione gamma-glutamylcysteinyltransferase 3 (479 aa).

The Peptidase C83 domain occupies 1–221; the sequence is MASAGLYRRV…GYMIISKLKR (221 aa). Catalysis depends on residues C56, H162, and D180.

This sequence belongs to the phytochelatin synthase family. Expressed in roots, nodules and leaves.

It catalyses the reaction [Glu(-Cys)](n)-Gly + glutathione + H(+) = [Glu(-Cys)](n+1)-Gly + glycine. Requires cadmium for activity. Its function is as follows. Involved in the synthesis of phytochelatins (PC) and homophytochelatins (hPC), the heavy-metal-binding peptides of plants. The protein is Glutathione gamma-glutamylcysteinyltransferase 3 (PCS3) of Lotus japonicus (Lotus corniculatus var. japonicus).